A 282-amino-acid chain; its full sequence is MVEAQLVLPAPAKLNLMLHILGRRPDGYHELQTLFQFLDYGDELGFALRQDGVIRLQTDVPGVAHDSNLIVKAARALQKQSGCTLGMDIWLEKRLPMGGGIGGGSSDAATTLLGLNHLWQLGWDEDRLAQLGLTLGADVPVFVRGHAAFAEGVGEILTPVDPEEPWYLVLVPQVAVSTAEIFSDPLLTRDTAPIKVRPVPKGNSRNDCKAAVERRYPEVRNALNLLGKFTEAKLTGTGSCVFGAFPNKAEADKVSALLTETLTGFVAKGSNISMLHRKLQIL.

The active site involves Lys-13. Residue 96–106 (PMGGGIGGGSS) coordinates ATP. Asp-138 is an active-site residue.

This sequence belongs to the GHMP kinase family. IspE subfamily.

The enzyme catalyses 4-CDP-2-C-methyl-D-erythritol + ATP = 4-CDP-2-C-methyl-D-erythritol 2-phosphate + ADP + H(+). The protein operates within isoprenoid biosynthesis; isopentenyl diphosphate biosynthesis via DXP pathway; isopentenyl diphosphate from 1-deoxy-D-xylulose 5-phosphate: step 3/6. Its function is as follows. Catalyzes the phosphorylation of the position 2 hydroxy group of 4-diphosphocytidyl-2C-methyl-D-erythritol. This Pseudomonas syringae pv. tomato (strain ATCC BAA-871 / DC3000) protein is 4-diphosphocytidyl-2-C-methyl-D-erythritol kinase.